We begin with the raw amino-acid sequence, 394 residues long: Proliferation-associated protein 2G4 (394 aa).

The residue at position 2 (Ser-2) is an N-acetylserine. At Ser-2 the chain carries Phosphoserine. Residues 2–48 form a necessary for nucleolar localization region; the sequence is SGEDEQQEQTIAEDLVVTKYKMGGDIANRVLRSLVEASSSGVSVLSL. The tract at residues 46–54 is RNA-binding; that stretch reads LSLCEKGDA. Lys-298 participates in a covalent cross-link: Glycyl lysine isopeptide (Lys-Gly) (interchain with G-Cter in SUMO2). The interval 301–394 is necessary for nucleolar localization; that stretch reads LLQPFNVLYE…ETLEENEAGD (94 aa). At Ser-335 the chain carries Phosphoserine. The interval 358-394 is disordered; it reads LQSSASRKTQKKKKKKASKTAENATSGETLEENEAGD. A Phosphoserine; by PKC/PRKCD modification is found at Ser-361. The segment at 361 to 375 is interaction with RNA; it reads SASRKTQKKKKKKAS. Basic residues predominate over residues 365–375; it reads KTQKKKKKKAS. Phosphothreonine is present on residues Thr-366 and Thr-386.

This sequence belongs to the peptidase M24 family. Isoform 2 interacts with the cytoplasmic domain of non-phosphorylated ERBB3; the interaction requires PKC activity. Interacts with AR. Treatment with HRG leads to dissociation from ERBB3 and increases association with AR. Interacts with NCL/nucleolin. Component of a ribonucleoprotein complex containing at least PA2G4, NCL, TOP1, PABPC2, RPLP0, acetylated histone H1 (HIST1H1A or H1F1), histone H1 2/4, RPL4, RPL8, RPL15, RPL18, RPL18A, RPL21, RPL11, RPL12, RPL28, RPL27, RPLP2 and RPL24. Interacts with HDAC2. Interacts with RB1; the interaction is enhanced upon PA2G4 dephosphorylation. Interacts with AKT1. Isoform 1 and isoform 2 interact with RNF20. Isoform 2 interacts with HUWE1. Interacts with DNAJC21. Phosphorylated on serine and threonine residues. Phosphorylation is enhanced by HRG treatment. Basal phosphorylation is PKC-dependent and HRG-induced phosphorylation is predominantly PKC-independent. Phosphorylation at Ser-361 by PKC/PRKCD regulates its nucleolar localization. Post-translationally, in cancer cells, isoform 2 is polyubiquitinated leading to its proteasomal degradation and phosphorylation by PKC/PRKCD enhances polyubiquitination. As to expression, isoform 2 is undetectable whereas isoform 1 is strongly expressed in cancer cells (at protein level). Isoform 1 and isoform 2 are widely expressed, including heart, brain, lung, pancreas, skeletal muscle, kidney, placenta and liver.

It localises to the cytoplasm. Its subcellular location is the nucleus. The protein resides in the nucleolus. Functionally, may play a role in a ERBB3-regulated signal transduction pathway. Seems be involved in growth regulation. Acts a corepressor of the androgen receptor (AR) and is regulated by the ERBB3 ligand neuregulin-1/heregulin (HRG). Inhibits transcription of some E2F1-regulated promoters, probably by recruiting histone acetylase (HAT) activity. Binds RNA. Associates with 28S, 18S and 5.8S mature rRNAs, several rRNA precursors and probably U3 small nucleolar RNA. May be involved in regulation of intermediate and late steps of rRNA processing. May be involved in ribosome assembly. Mediates cap-independent translation of specific viral IRESs (internal ribosomal entry site). Regulates cell proliferation, differentiation, and survival. Isoform 1 suppresses apoptosis whereas isoform 2 promotes cell differentiation. This Homo sapiens (Human) protein is Proliferation-associated protein 2G4 (PA2G4).